A 106-amino-acid polypeptide reads, in one-letter code: Thioredoxin (106 aa).

In terms of domain architecture, Thioredoxin spans Val2–Lys106. Catalysis depends on nucleophile residues Cys32 and Cys35. An intrachain disulfide couples Cys32 to Cys35.

Belongs to the thioredoxin family.

Its subcellular location is the cytoplasm. In terms of biological role, participates in various redox reactions through the reversible oxidation of its active center dithiol to a disulfide and catalyzes dithiol-disulfide exchange reactions. The chain is Thioredoxin (THIO) from Geodia cydonium (Sponge).